Consider the following 328-residue polypeptide: Nucleotide-binding protein BL0705 (328 aa).

The disordered stretch occupies residues 1–35 (MNQQTTNRDTGEAAATNAPANSATSTSTPDNQPTP). A compositionally biased stretch (low complexity) spans 13-29 (AAATNAPANSATSTSTP). 46 to 53 (GMSGAGRS) provides a ligand contact to ATP. 101 to 104 (DVRS) contacts GTP.

Belongs to the RapZ-like family.

In terms of biological role, displays ATPase and GTPase activities. The polypeptide is Nucleotide-binding protein BL0705 (Bifidobacterium longum (strain NCC 2705)).